A 160-amino-acid polypeptide reads, in one-letter code: Epithelial membrane protein 1 (160 aa).

The chain crosses the membrane as a helical span at residues 1-21 (MLVLLAGLFVVHIATAIMLFV). N-linked (GlcNAc...) asparagine glycosylation occurs at Asn43. Helical transmembrane passes span 67 to 87 (FMILSIIFSIISLVVFVFQLF), 95 to 115 (FFLSGSTMLVCWLCILIGVSI), and 137 to 157 (FILTWICFCFSFIIGILYMVL).

The protein belongs to the PMP-22/EMP/MP20 family. In terms of tissue distribution, most prominently found in the gastrointestinal tract, skin, lung, and brain but not in liver.

Its subcellular location is the membrane. In Rattus norvegicus (Rat), this protein is Epithelial membrane protein 1 (Emp1).